A 351-amino-acid chain; its full sequence is N-acetyl-gamma-glutamyl-phosphate reductase (351 aa).

Cys-154 is a catalytic residue.

Belongs to the NAGSA dehydrogenase family. Type 1 subfamily.

The protein localises to the cytoplasm. It carries out the reaction N-acetyl-L-glutamate 5-semialdehyde + phosphate + NADP(+) = N-acetyl-L-glutamyl 5-phosphate + NADPH + H(+). The protein operates within amino-acid biosynthesis; L-arginine biosynthesis; N(2)-acetyl-L-ornithine from L-glutamate: step 3/4. Functionally, catalyzes the NADPH-dependent reduction of N-acetyl-5-glutamyl phosphate to yield N-acetyl-L-glutamate 5-semialdehyde. The polypeptide is N-acetyl-gamma-glutamyl-phosphate reductase (Prochlorococcus marinus subsp. pastoris (strain CCMP1986 / NIES-2087 / MED4)).